Consider the following 153-residue polypeptide: UPF0756 membrane protein LSL_0936 (153 aa).

The next 5 helical transmembrane spans lie at 4 to 24 (WIFLGLILLIAYLGKNSSLLI), 26 to 46 (GAVVIVIKLFPFLSQKLYPVI), 51 to 71 (INWGVTIISVAILIPIATGQI), 86 to 106 (WIAVVCGILVAILSKHGVNLL), and 116 to 136 (LVIGTIIGVVFLKGVAAGPVI).

Belongs to the UPF0756 family.

It is found in the cell membrane. The sequence is that of UPF0756 membrane protein LSL_0936 from Ligilactobacillus salivarius (strain UCC118) (Lactobacillus salivarius).